Here is a 263-residue protein sequence, read N- to C-terminus: 3-methyl-2-oxobutanoate hydroxymethyltransferase (263 aa).

Mg(2+) contacts are provided by D45 and D84. 3-methyl-2-oxobutanoate is bound by residues 45–46 (DS), D84, and K112. Mg(2+) is bound at residue E114. E180 serves as the catalytic Proton acceptor.

This sequence belongs to the PanB family. In terms of assembly, homodecamer; pentamer of dimers. It depends on Mg(2+) as a cofactor.

The protein localises to the cytoplasm. It catalyses the reaction 3-methyl-2-oxobutanoate + (6R)-5,10-methylene-5,6,7,8-tetrahydrofolate + H2O = 2-dehydropantoate + (6S)-5,6,7,8-tetrahydrofolate. It functions in the pathway cofactor biosynthesis; (R)-pantothenate biosynthesis; (R)-pantoate from 3-methyl-2-oxobutanoate: step 1/2. Catalyzes the reversible reaction in which hydroxymethyl group from 5,10-methylenetetrahydrofolate is transferred onto alpha-ketoisovalerate to form ketopantoate. This chain is 3-methyl-2-oxobutanoate hydroxymethyltransferase, found in Salmonella paratyphi C (strain RKS4594).